Here is a 414-residue protein sequence, read N- to C-terminus: Serine hydroxymethyltransferase (414 aa).

(6S)-5,6,7,8-tetrahydrofolate contacts are provided by residues Leu116 and Gly120–Leu122. Residue Lys224 is modified to N6-(pyridoxal phosphate)lysine. (6S)-5,6,7,8-tetrahydrofolate contacts are provided by residues Glu240 and Ser348–Phe350.

The protein belongs to the SHMT family. As to quaternary structure, homodimer. Pyridoxal 5'-phosphate is required as a cofactor.

The protein resides in the cytoplasm. It catalyses the reaction (6R)-5,10-methylene-5,6,7,8-tetrahydrofolate + glycine + H2O = (6S)-5,6,7,8-tetrahydrofolate + L-serine. Its pathway is one-carbon metabolism; tetrahydrofolate interconversion. The protein operates within amino-acid biosynthesis; glycine biosynthesis; glycine from L-serine: step 1/1. In terms of biological role, catalyzes the reversible interconversion of serine and glycine with tetrahydrofolate (THF) serving as the one-carbon carrier. This reaction serves as the major source of one-carbon groups required for the biosynthesis of purines, thymidylate, methionine, and other important biomolecules. Also exhibits THF-independent aldolase activity toward beta-hydroxyamino acids, producing glycine and aldehydes, via a retro-aldol mechanism. This chain is Serine hydroxymethyltransferase, found in Campylobacter jejuni (strain RM1221).